Consider the following 274-residue polypeptide: Exosome complex component Rrp42 (274 aa).

Belongs to the RNase PH family. Rrp42 subfamily. In terms of assembly, component of the archaeal exosome complex. Forms a hexameric ring-like arrangement composed of 3 Rrp41-Rrp42 heterodimers. The hexameric ring associates with a trimer of Rrp4 and/or Csl4 subunits.

Its subcellular location is the cytoplasm. Its function is as follows. Non-catalytic component of the exosome, which is a complex involved in RNA degradation. Contributes to the structuring of the Rrp41 active site. In Pyrococcus horikoshii (strain ATCC 700860 / DSM 12428 / JCM 9974 / NBRC 100139 / OT-3), this protein is Exosome complex component Rrp42.